Consider the following 412-residue polypeptide: L-cysteine:1D-myo-inositol 2-amino-2-deoxy-alpha-D-glucopyranoside ligase (412 aa).

Cysteine 43 contacts Zn(2+). Residues 43–46, threonine 58, and 81–83 each bind L-cysteinyl-5'-AMP; these read CGIT and NVT. Positions 45–55 match the 'HIGH' region motif; sequence ITPYDATHLGH. Positions 187-192 match the 'ERGGDP' region motif; it reads ERGGDP. Tryptophan 227 is an L-cysteinyl-5'-AMP binding site. Position 231 (cysteine 231) interacts with Zn(2+). Residue 249 to 251 participates in L-cysteinyl-5'-AMP binding; it reads GSD. Histidine 256 contacts Zn(2+). L-cysteinyl-5'-AMP is bound at residue isoleucine 283. A 'KMSKS' region motif is present at residues 289 to 293; that stretch reads KMSKS.

This sequence belongs to the class-I aminoacyl-tRNA synthetase family. MshC subfamily. In terms of assembly, monomer. Zn(2+) serves as cofactor.

It carries out the reaction 1D-myo-inositol 2-amino-2-deoxy-alpha-D-glucopyranoside + L-cysteine + ATP = 1D-myo-inositol 2-(L-cysteinylamino)-2-deoxy-alpha-D-glucopyranoside + AMP + diphosphate + H(+). In terms of biological role, catalyzes the ATP-dependent condensation of GlcN-Ins and L-cysteine to form L-Cys-GlcN-Ins. The chain is L-cysteine:1D-myo-inositol 2-amino-2-deoxy-alpha-D-glucopyranoside ligase from Saccharopolyspora erythraea (strain ATCC 11635 / DSM 40517 / JCM 4748 / NBRC 13426 / NCIMB 8594 / NRRL 2338).